The sequence spans 589 residues: Phenylalanine--tRNA ligase beta subunit (589 aa).

The B5 domain maps to 290–368 (LNPTCFKADI…IAYGYDNLKH (79 aa)). The Mg(2+) site is built by Asp-346, Asp-352, Glu-355, and Asp-356.

Belongs to the phenylalanyl-tRNA synthetase beta subunit family. Type 2 subfamily. In terms of assembly, tetramer of two alpha and two beta subunits. Mg(2+) serves as cofactor.

The protein resides in the cytoplasm. It is found in the nucleus. The enzyme catalyses tRNA(Phe) + L-phenylalanine + ATP = L-phenylalanyl-tRNA(Phe) + AMP + diphosphate + H(+). The polypeptide is Phenylalanine--tRNA ligase beta subunit (frs1) (Schizosaccharomyces pombe (strain 972 / ATCC 24843) (Fission yeast)).